The sequence spans 180 residues: Protein GrpE (180 aa).

The disordered stretch occupies residues 1–21 (MSEEVKEQNLPEVEPVQEAAS).

Belongs to the GrpE family. Homodimer.

It localises to the cytoplasm. Participates actively in the response to hyperosmotic and heat shock by preventing the aggregation of stress-denatured proteins, in association with DnaK and GrpE. It is the nucleotide exchange factor for DnaK and may function as a thermosensor. Unfolded proteins bind initially to DnaJ; upon interaction with the DnaJ-bound protein, DnaK hydrolyzes its bound ATP, resulting in the formation of a stable complex. GrpE releases ADP from DnaK; ATP binding to DnaK triggers the release of the substrate protein, thus completing the reaction cycle. Several rounds of ATP-dependent interactions between DnaJ, DnaK and GrpE are required for fully efficient folding. The polypeptide is Protein GrpE (Campylobacter concisus (strain 13826)).